Reading from the N-terminus, the 410-residue chain is Cysteine desulfurase IscS (410 aa).

Pyridoxal 5'-phosphate contacts are provided by residues 80–81, Asn-160, Gln-188, and 208–210; these read AT and SGH. N6-(pyridoxal phosphate)lysine is present on Lys-211. Thr-248 is a pyridoxal 5'-phosphate binding site. Cys-334 functions as the Cysteine persulfide intermediate in the catalytic mechanism. Cys-334 contacts [2Fe-2S] cluster.

The protein belongs to the class-V pyridoxal-phosphate-dependent aminotransferase family. NifS/IscS subfamily. In terms of assembly, homodimer. Forms a heterotetramer with IscU, interacts with other sulfur acceptors. It depends on pyridoxal 5'-phosphate as a cofactor.

Its subcellular location is the cytoplasm. The catalysed reaction is (sulfur carrier)-H + L-cysteine = (sulfur carrier)-SH + L-alanine. It participates in cofactor biosynthesis; iron-sulfur cluster biosynthesis. In terms of biological role, master enzyme that delivers sulfur to a number of partners involved in Fe-S cluster assembly, tRNA modification or cofactor biosynthesis. Catalyzes the removal of elemental sulfur atoms from cysteine to produce alanine. Functions as a sulfur delivery protein for Fe-S cluster synthesis onto IscU, an Fe-S scaffold assembly protein, as well as other S acceptor proteins. The chain is Cysteine desulfurase IscS from Rickettsia typhi (strain ATCC VR-144 / Wilmington).